A 511-amino-acid chain; its full sequence is Bifunctional purine biosynthesis protein PurH (511 aa).

Positions 1-145 (MKQRALVSVS…KNHKFVSVIV (145 aa)) constitute an MGS-like domain.

Belongs to the PurH family.

It catalyses the reaction (6R)-10-formyltetrahydrofolate + 5-amino-1-(5-phospho-beta-D-ribosyl)imidazole-4-carboxamide = 5-formamido-1-(5-phospho-D-ribosyl)imidazole-4-carboxamide + (6S)-5,6,7,8-tetrahydrofolate. The catalysed reaction is IMP + H2O = 5-formamido-1-(5-phospho-D-ribosyl)imidazole-4-carboxamide. Its pathway is purine metabolism; IMP biosynthesis via de novo pathway; 5-formamido-1-(5-phospho-D-ribosyl)imidazole-4-carboxamide from 5-amino-1-(5-phospho-D-ribosyl)imidazole-4-carboxamide (10-formyl THF route): step 1/1. It functions in the pathway purine metabolism; IMP biosynthesis via de novo pathway; IMP from 5-formamido-1-(5-phospho-D-ribosyl)imidazole-4-carboxamide: step 1/1. This chain is Bifunctional purine biosynthesis protein PurH, found in Bacillus cereus (strain AH187).